An 81-amino-acid chain; its full sequence is UPF0248 protein TK0315 (81 aa).

Belongs to the UPF0248 family.

This Thermococcus kodakarensis (strain ATCC BAA-918 / JCM 12380 / KOD1) (Pyrococcus kodakaraensis (strain KOD1)) protein is UPF0248 protein TK0315.